The chain runs to 273 residues: ComE operon protein 4 (273 aa).

The protein belongs to the pyrroline-5-carboxylate reductase family.

In terms of biological role, dispensable for transformability. Not known if it can act as a pyrroline-5-carboxylate reductase. The sequence is that of ComE operon protein 4 (comER) from Bacillus subtilis (strain 168).